The primary structure comprises 1137 residues: Otoancorin (1137 aa).

An N-terminal signal peptide occupies residues 1–23 (MSQGPRTCSLLLVLLLSHGGAYQ). 11 N-linked (GlcNAc...) asparagine glycosylation sites follow: asparagine 156, asparagine 211, asparagine 244, asparagine 289, asparagine 321, asparagine 380, asparagine 384, asparagine 530, asparagine 594, asparagine 740, and asparagine 798. The segment covering 1095–1115 (HSWQTDPLSSSPTWPASTGSP) has biased composition (polar residues). The interval 1095–1119 (HSWQTDPLSSSPTWPASTGSPTGEP) is disordered. The GPI-anchor amidated glycine moiety is linked to residue glycine 1113. Residues 1114 to 1137 (SPTGEPASQALWLGCTLLLLTAKS) constitute a propeptide, removed in mature form.

This sequence belongs to the stereocilin family. Expressed in the inner ear and vestibule.

Its subcellular location is the apical cell membrane. The protein localises to the secreted. It is found in the extracellular space. It localises to the extracellular matrix. Its function is as follows. May act as an adhesion molecule. The protein is Otoancorin (Otoa) of Mus musculus (Mouse).